A 241-amino-acid chain; its full sequence is Agamous-like MADS-box protein AGL9 homolog (241 aa).

One can recognise an MADS-box domain in the interval 3-57; the sequence is RGRVELKRIENKINRQVTFAKRRNGLLKKAYELSVLCDAEVALIIFSNRGKLYEF. Residues 89-179 form the K-box domain; sequence EISSQQEYLK…KQRLMEGSTL (91 aa).

Its subcellular location is the nucleus. In terms of biological role, probable transcription factor. The protein is Agamous-like MADS-box protein AGL9 homolog (FBP2) of Petunia hybrida (Petunia).